We begin with the raw amino-acid sequence, 165 residues long: Nucleotide-binding protein PMM0481 (165 aa).

This sequence belongs to the YajQ family.

Nucleotide-binding protein. The protein is Nucleotide-binding protein PMM0481 of Prochlorococcus marinus subsp. pastoris (strain CCMP1986 / NIES-2087 / MED4).